The primary structure comprises 873 residues: Zinc fingers and homeoboxes protein 1 (873 aa).

The disordered stretch occupies residues 1–63 (MASRRKSTTP…ESVDSDNQQN (63 aa)). The segment covering 18–30 (QDPDLELISDLEE) has biased composition (acidic residues). A Phosphothreonine modification is found at Thr-36. Phosphoserine occurs at positions 45, 47, and 48. 2 C2H2-type zinc fingers span residues 70–93 (YECK…DSEH) and 102–125 (YVCV…LKYH). A Glycyl lysine isopeptide (Lys-Gly) (interchain with G-Cter in SUMO2) cross-link involves residue Lys-159. Residues 198–247 (VHHNSAEGTSEEKENGVKASREENAENTSSSASESNTSTSTVNQVHPSPA) are disordered. Ser-202 is modified (phosphoserine). Residues 207 to 221 (SEEKENGVKASREEN) show a composition bias toward basic and acidic residues. Over residues 223–238 (ENTSSSASESNTSTST) the composition is skewed to low complexity. Residues 272 to 432 (NSNLVPKVLI…QTNVQKSQVP (161 aa)) are required for dimerization. Positions 272-564 (NSNLVPKVLI…SQPKQSWNPF (293 aa)) are required for interaction with NFYA. The homeobox 1 DNA-binding region spans 284 to 346 (NSIPTYNAAL…LKHGVSWTPE (63 aa)). A disordered region spans residues 430–455 (QVPAAQPAAETKPATAAVPSSPSVRP). Glycyl lysine isopeptide (Lys-Gly) (interchain with G-Cter in SUMO2) cross-links involve residues Lys-441 and Lys-485. A DNA-binding region (homeobox 2) is located at residues 464–526 (SFGIRAKKTK…YNQRNSKSNQ (63 aa)). 3 disordered regions span residues 540-568 (IDSS…PDFA), 627-664 (DEKV…TGKI), and 731-767 (SSSL…KRMN). A compositionally biased stretch (low complexity) spans 551–560 (AAAASQPKQS). A DNA-binding region (homeobox 3) is located at residues 569-631 (PQKFKEKTAE…TKALKDEKVE (63 aa)). Residue Lys-629 forms a Glycyl lysine isopeptide (Lys-Gly) (interchain with G-Cter in SUMO2) linkage. Residue Ser-648 is modified to Phosphoserine. The segment at residues 660–722 (GTGKICKKTP…YAWKNGNLKW (63 aa)) is a DNA-binding region (homeobox 4). A required for nuclear localization region spans residues 734 to 768 (LNGLSSLRKRGRGRPKGRGRGRPRGRPRGGKRMNT). Positions 740–764 (LRKRGRGRPKGRGRGRPRGRPRGGK) are enriched in basic residues. Ser-774 is modified (phosphoserine). Residues 777 to 832 (KFKTGTAILKDYYLKHKFLNEQDLDELVNRSHMGYEQVREWFAERQRRSELGIELF) constitute a DNA-binding region (homeobox 5). The interval 829–873 (IELFEENEEEDEVIDDQEEDEEETDDSDTWEPPRHVKRKLSKSDD) is disordered. A compositionally biased stretch (acidic residues) spans 831 to 857 (LFEENEEEDEVIDDQEEDEEETDDSDT). Residues 831–873 (LFEENEEEDEVIDDQEEDEEETDDSDTWEPPRHVKRKLSKSDD) are required for repressor activity. The segment covering 863-873 (HVKRKLSKSDD) has biased composition (basic residues).

This sequence belongs to the ZHX family. In terms of assembly, forms homodimers. Heterodimer (via HD1 domain) with ZHX2 (via HD1 domain). Also forms a heterodimer with ZHX3 which is a prerequisite for repressor activity. Interacts with ATF7IP and NFYA. Interacts (via homeobox domains) with DNMT3B (via PWWP domain). Ubiquitously expressed.

It localises to the nucleus. In terms of biological role, acts as a transcriptional repressor. Increases DNMT3B-mediated repressive transcriptional activity when DNMT3B is tethered to DNA. May link molecule between DNMT3B and other co-repressor proteins. This is Zinc fingers and homeoboxes protein 1 (Zhx1) from Rattus norvegicus (Rat).